A 487-amino-acid chain; its full sequence is GTPase Der (487 aa).

2 consecutive EngA-type G domains span residues 3–166 and 201–374; these read PVIA…IAEL and VKLA…ESAT. GTP-binding positions include 9–16, 56–60, 118–121, 207–214, 254–258, and 319–322; these read GRPNVGKS, DTGGI, NKTD, DTAGV, and NKWD. In terms of domain architecture, KH-like spans 375 to 459; that stretch reads KRISTAMLRR…PIKIEFREGD (85 aa).

The protein belongs to the TRAFAC class TrmE-Era-EngA-EngB-Septin-like GTPase superfamily. EngA (Der) GTPase family. Associates with the 50S ribosomal subunit.

Its function is as follows. GTPase that plays an essential role in the late steps of ribosome biogenesis. The chain is GTPase Der from Pseudoalteromonas translucida (strain TAC 125).